The sequence spans 379 residues: NAD-dependent protein deacetylase sirtuin-2 (379 aa).

A compositionally biased stretch (basic and acidic residues) spans 1-10 (MSEEVSKRVE). Residues 1–32 (MSEEVSKRVEEEADTPGLEGQSDDSSDEGDAS) are disordered. Over residues 21–32 (QSDDSSDEGDAS) the composition is skewed to acidic residues. The region spanning 55 to 335 (KVLDELTLDS…MTLAELLGWK (281 aa)) is the Deacetylase sirtuin-type domain. NAD(+) is bound by residues 83-87 (AGIST), 93-95 (DFR), and 165-168 (QNID). Residue H185 is the Proton acceptor of the active site. Positions 193, 198, 219, and 222 each coordinate Zn(2+). Residues 260 to 261 (TS), 284 to 286 (NME), and C321 contribute to the NAD(+) site. Residues 349–361 (IDSKDAKKTDKEA) are compositionally biased toward basic and acidic residues. The tract at residues 349-379 (IDSKDAKKTDKEASQSSKSAVAEAEKTDKTE) is disordered.

This sequence belongs to the sirtuin family. Class I subfamily. Zn(2+) serves as cofactor.

The protein localises to the cytoplasm. Its subcellular location is the nucleus. The enzyme catalyses N(6)-acetyl-L-lysyl-[protein] + NAD(+) + H2O = 2''-O-acetyl-ADP-D-ribose + nicotinamide + L-lysyl-[protein]. The catalysed reaction is N(6)-tetradecanoyl-L-lysyl-[protein] + NAD(+) + H2O = 2''-O-tetradecanoyl-ADP-D-ribose + nicotinamide + L-lysyl-[protein]. It carries out the reaction N(6)-hexadecanoyl-L-lysyl-[protein] + NAD(+) + H2O = 2''-O-hexadecanoyl-ADP-D-ribose + nicotinamide + L-lysyl-[protein]. NAD-dependent protein deacetylase, which deacetylates internal lysines on histone and alpha-tubulin as well as many other proteins such as key transcription factors. Participates in the modulation of multiple and diverse biological processes such as cell cycle control, genomic integrity, microtubule dynamics, cell differentiation, metabolic networks, and autophagy. Plays a major role in the control of cell cycle progression and genomic stability. Deacetylates histone H4 at 'Lys-16' (H4K16ac) at the VEGFA promoter. Thereby contributes to regulate expression of vegfa, a key regulator of angiogenesis. In addition to protein deacetylase activity, also has activity toward long-chain fatty acyl groups and mediates protein-lysine demyristoylation and depalmitoylation of target proteins. The protein is NAD-dependent protein deacetylase sirtuin-2 (sirt2) of Danio rerio (Zebrafish).